Reading from the N-terminus, the 143-residue chain is Hemoglobin subunit alpha-1 (143 aa).

Serine 2 bears the N-acetylserine mark. In terms of domain architecture, Globin spans 2-143 (SLSSKDKATV…LALALAEKYR (142 aa)). Histidine 60 is an O2 binding site. A heme b-binding site is contributed by histidine 89.

The protein belongs to the globin family. Hb 1 is a heterotetramer of two alpha-1 and two beta-1 chains. Red blood cells.

Involved in oxygen transport from gills to the various peripheral tissues. This is Hemoglobin subunit alpha-1 (hba1) from Arctogadus glacialis (Arctic cod).